Here is a 418-residue protein sequence, read N- to C-terminus: E3 ubiquitin-protein ligase makorin-2 (418 aa).

C3H1-type zinc fingers lie at residues 2–29 and 31–58; these read NTKHVTCRYFLHGVCREGGRCLFSHDLA and SKPSTVCRFYQRGQCAYGARCRYDHVKP. The disordered stretch occupies residues 76–100; the sequence is ESTPPLLPTQEAAAPVTKSAPQRRE. The segment at 164–191 adopts a C3H1-type 3 zinc-finger fold; the sequence is DAPQQLCPFAQAGGCHYGESCPYIHGNV. Positions 192–221 are makorin-type Cys-His; that stretch reads CEICGLQVLHPYDQEQRGHHEKLCMANFER. Residues 237 to 291 form an RING-type zinc finger; the sequence is CSICMERVYDKQSPSERRFGILSNCHHTYCLACIRQWRCARQFENPVIKSCPECR. The C3H1-type 4 zinc-finger motif lies at 320–349; that stretch reads GMGKKACKYFDQGRGTCPFGGKCLYLHAYP.

Its subcellular location is the cytoplasm. The protein resides in the nucleus. It catalyses the reaction S-ubiquitinyl-[E2 ubiquitin-conjugating enzyme]-L-cysteine + [acceptor protein]-L-lysine = [E2 ubiquitin-conjugating enzyme]-L-cysteine + N(6)-ubiquitinyl-[acceptor protein]-L-lysine.. It participates in protein modification; protein ubiquitination. E3 ubiquitin ligase catalyzing the covalent attachment of ubiquitin moieties onto substrate proteins. Inhibits neurogenesis and axis formation during embryonic development by modulating the phosphatidylinositol 3-kinase (PI3K) pathway. Acts downstream of PI3K and akt1 to up-regulate gsk3b mRNA expression. The chain is E3 ubiquitin-protein ligase makorin-2 (mkrn2) from Xenopus tropicalis (Western clawed frog).